Here is a 20-residue protein sequence, read N- to C-terminus: Antiviral protein Y3 (20 aa).

The sequence is that of Antiviral protein Y3 from Pleurotus citrinopileatus (Golden oyster mushroom).